The primary structure comprises 2552 residues: Probable polyketide synthase 40 (2552 aa).

A Ketosynthase family 3 (KS3) domain is found at 13-443; it reads CNKVAIIGIG…GSNCCLIVSS (431 aa). Catalysis depends on for beta-ketoacyl synthase activity residues Cys179, His320, and His362. Residues 629 to 662 are acyl/malonyl transferase; it reads GIKPSIIVGHSLGEISSSYCSGMIDLDTFCYLIY. The active-site For acyl/malonyl transferase activity is Ser639. The segment at 928-1063 is N-terminal hotdog fold; the sequence is INHLGISNSN…ANFQLFSRGQ (136 aa). Positions 928–1235 constitute a PKS/mFAS DH domain; that stretch reads INHLGISNSN…FKSTTKIKDS (308 aa). The active-site Proton acceptor; for dehydratase activity is the His962. A C-terminal hotdog fold region spans residues 1087-1235; sequence NLTKLSKQEL…FKSTTKIKDS (149 aa). The active-site Proton donor; for dehydratase activity is Asp1149. The region spanning 2467–2546 is the Carrier domain; sequence DNVELTVDQL…SFIQLVKNSI (80 aa). Position 2505 is an O-(pantetheine 4'-phosphoryl)serine (Ser2505).

Pantetheine 4'-phosphate is required as a cofactor.

In terms of biological role, probable polyketide synthase. This Dictyostelium discoideum (Social amoeba) protein is Probable polyketide synthase 40 (pks40).